A 367-amino-acid chain; its full sequence is Uptake hydrogenase small subunit (367 aa).

The segment at residues Met1–Ala45 is a signal peptide (tat-type signal). 8 residues coordinate [4Fe-4S] cluster: Cys62, Cys65, Cys160, Cys194, His232, Cys235, Cys260, and Cys266. [3Fe-4S] cluster-binding residues include Cys275, Cys294, and Cys297.

The protein belongs to the [NiFe]/[NiFeSe] hydrogenase small subunit family. As to quaternary structure, heterodimer of a large and a small subunit. [4Fe-4S] cluster is required as a cofactor. Requires [3Fe-4S] cluster as cofactor. In terms of processing, predicted to be exported by the Tat system. The position of the signal peptide cleavage has been experimentally proven.

It is found in the cell membrane. The enzyme catalyses H2 + A = AH2. In terms of biological role, this enzyme recycles the H(2) produced by nitrogenase to increase the production of ATP and to protect nitrogenase against inhibition or damage by O(2) under carbon- or phosphate-limited conditions. The chain is Uptake hydrogenase small subunit (hoxS) from Afipia carboxidovorans (strain ATCC 49405 / DSM 1227 / KCTC 32145 / OM5) (Oligotropha carboxidovorans).